The chain runs to 152 residues: 3-hydroxyacyl-[acyl-carrier-protein] dehydratase FabZ (152 aa).

His58 is a catalytic residue.

This sequence belongs to the thioester dehydratase family. FabZ subfamily.

The protein localises to the cytoplasm. The enzyme catalyses a (3R)-hydroxyacyl-[ACP] = a (2E)-enoyl-[ACP] + H2O. Involved in unsaturated fatty acids biosynthesis. Catalyzes the dehydration of short chain beta-hydroxyacyl-ACPs and long chain saturated and unsaturated beta-hydroxyacyl-ACPs. The chain is 3-hydroxyacyl-[acyl-carrier-protein] dehydratase FabZ from Synechococcus sp. (strain RCC307).